The chain runs to 348 residues: 2-methyl-6-phytyl-1,4-hydroquinone methyltransferase 2, chloroplastic (348 aa).

Residues 1–48 (MAMASSAYAPAGGVGTHSAPGRIRPPRGLGFSTTTTKSRPLVLTRRGG) are disordered. The N-terminal 59 residues, 1–59 (MAMASSAYAPAGGVGTHSAPGRIRPPRGLGFSTTTTKSRPLVLTRRGGGGGNISVARLR), are a transit peptide targeting the chloroplast. At 60 to 317 (CAASSSSAAA…PVNPITFLFR (258 aa)) the chain is on the chloroplast intermembrane side. Residues 125–134 (VVDVGGGTGF) are SAM motif I. The segment at 170–183 (VTIMEGDAEDLPFP) is SAM motif II. Residues 211–224 (RVLRLGGVACMIGP) form an SAM motif III region. Residues 318-338 (FLMGTICAAYYVLVPIYMWIK) traverse the membrane as a helical segment. Residues 339-348 (DQIVPKGMPI) are Stromal-facing.

Belongs to the class I-like SAM-binding methyltransferase superfamily. MPBQ/MBSQ MT family.

The protein localises to the plastid. The protein resides in the chloroplast inner membrane. The catalysed reaction is 2-methyl-6-phytyl-1,4-benzene-1,4-diol + S-adenosyl-L-methionine = 2,3-dimethyl-6-phytylbenzene-1,4-diol + S-adenosyl-L-homocysteine + H(+). It catalyses the reaction 2-methyl-6-(all-trans-nonaprenyl)benzene-1,4-diol + S-adenosyl-L-methionine = plastoquinol-9 + S-adenosyl-L-homocysteine + H(+). It carries out the reaction 6-geranylgeranyl-2-methylbenzene-1,4-diol + S-adenosyl-L-methionine = 6-geranylgeranyl-2,3-dimethylbenzene-1,4-diol + S-adenosyl-L-homocysteine + H(+). The protein operates within cofactor biosynthesis; tocopherol biosynthesis. Involved in a key methylation step in both tocopherols (vitamin E) and plastoquinone synthesis. Catalyzes the conversion of 2-methyl-6-phytyl-1,4-hydroquinone (MPBQ) to 2,3-dimethyl-6-phytyl-1,4-hydroquinone (DMPQ, a substrate for tocopherol cyclase), and 2-methyl-6-solanyl-1,4-benzoquinone (MSBQ) to plastoquinone. The protein is 2-methyl-6-phytyl-1,4-hydroquinone methyltransferase 2, chloroplastic of Oryza sativa subsp. japonica (Rice).